Consider the following 434-residue polypeptide: Adenylosuccinate synthetase (434 aa).

GTP-binding positions include 25–31 (GDEGKGK) and 53–55 (GHT). Aspartate 26 functions as the Proton acceptor in the catalytic mechanism. Mg(2+) contacts are provided by aspartate 26 and glycine 53. IMP-binding positions include 26–29 (DEGK), 51–54 (NAGH), threonine 142, arginine 156, asparagine 233, threonine 248, and arginine 312. The active-site Proton donor is the histidine 54. 308 to 314 (VTTGRKR) serves as a coordination point for substrate. GTP is bound by residues arginine 314, 340-342 (KLD), and 422-424 (GVG).

It belongs to the adenylosuccinate synthetase family. Homodimer. The cofactor is Mg(2+).

The protein resides in the cytoplasm. The enzyme catalyses IMP + L-aspartate + GTP = N(6)-(1,2-dicarboxyethyl)-AMP + GDP + phosphate + 2 H(+). The protein operates within purine metabolism; AMP biosynthesis via de novo pathway; AMP from IMP: step 1/2. Its activity is regulated as follows. Competitively Inhibited by GMP. Allosterically inhibited by AMP. In terms of biological role, plays an important role in the de novo pathway and in the salvage pathway of purine nucleotide biosynthesis. Catalyzes the first committed step in the biosynthesis of AMP from IMP. In Schizosaccharomyces pombe (strain 972 / ATCC 24843) (Fission yeast), this protein is Adenylosuccinate synthetase (ade2).